We begin with the raw amino-acid sequence, 142 residues long: Large ribosomal subunit protein uL11 (142 aa).

This sequence belongs to the universal ribosomal protein uL11 family. Part of the ribosomal stalk of the 50S ribosomal subunit. Interacts with L10 and the large rRNA to form the base of the stalk. L10 forms an elongated spine to which L12 dimers bind in a sequential fashion forming a multimeric L10(L12)X complex. One or more lysine residues are methylated.

In terms of biological role, forms part of the ribosomal stalk which helps the ribosome interact with GTP-bound translation factors. The polypeptide is Large ribosomal subunit protein uL11 (Pseudoalteromonas translucida (strain TAC 125)).